The primary structure comprises 156 residues: MSRKNQAPKREVLPDPLYNSKIVTRLINRVMLDGKRGTAATIVYYAFSAIKEATGNDALEVFETAMDNIMPVLEVRARRVGGSNYQVPVEVRPERRTTLGLRWLVNASRARGEHTMKDRLAKEIMDAANNTGASVKKREDTHKMAEANRAFAHFRW.

Belongs to the universal ribosomal protein uS7 family. As to quaternary structure, part of the 30S ribosomal subunit. Contacts proteins S9 and S11.

One of the primary rRNA binding proteins, it binds directly to 16S rRNA where it nucleates assembly of the head domain of the 30S subunit. Is located at the subunit interface close to the decoding center, probably blocks exit of the E-site tRNA. The chain is Small ribosomal subunit protein uS7 from Streptococcus pyogenes serotype M12 (strain MGAS2096).